Reading from the N-terminus, the 979-residue chain is Glycine dehydrogenase (decarboxylating) (979 aa).

N6-(pyridoxal phosphate)lysine is present on K724.

Belongs to the GcvP family. The glycine cleavage system is composed of four proteins: P, T, L and H. Pyridoxal 5'-phosphate serves as cofactor.

It catalyses the reaction N(6)-[(R)-lipoyl]-L-lysyl-[glycine-cleavage complex H protein] + glycine + H(+) = N(6)-[(R)-S(8)-aminomethyldihydrolipoyl]-L-lysyl-[glycine-cleavage complex H protein] + CO2. The glycine cleavage system catalyzes the degradation of glycine. The P protein binds the alpha-amino group of glycine through its pyridoxal phosphate cofactor; CO(2) is released and the remaining methylamine moiety is then transferred to the lipoamide cofactor of the H protein. The sequence is that of Glycine dehydrogenase (decarboxylating) from Nostoc punctiforme (strain ATCC 29133 / PCC 73102).